The chain runs to 431 residues: Trigger factor (431 aa).

In terms of domain architecture, PPIase FKBP-type spans 161–245 (TDIVIGDVQK…VKEIKRMELP (85 aa)).

This sequence belongs to the FKBP-type PPIase family. Tig subfamily.

Its subcellular location is the cytoplasm. The enzyme catalyses [protein]-peptidylproline (omega=180) = [protein]-peptidylproline (omega=0). Its function is as follows. Involved in protein export. Acts as a chaperone by maintaining the newly synthesized protein in an open conformation. Functions as a peptidyl-prolyl cis-trans isomerase. This is Trigger factor from Chloroherpeton thalassium (strain ATCC 35110 / GB-78).